The chain runs to 150 residues: Azurin (150 aa).

The signal sequence occupies residues 1–21; it reads MFKQVLGGMALMAAFSAPVLA. One can recognise a Plastocyanin-like domain in the interval 22–150; sequence AECSVDIAGT…LMKGTLKLVD (129 aa). Cys24 and Cys47 are joined by a disulfide. 4 residues coordinate Cu cation: His67, Cys133, His138, and Met142.

The protein localises to the periplasm. This chain is Azurin, found in Bordetella bronchiseptica (strain ATCC BAA-588 / NCTC 13252 / RB50) (Alcaligenes bronchisepticus).